We begin with the raw amino-acid sequence, 921 residues long: Isoleucine--tRNA ligase 1 (921 aa).

The 'HIGH' region motif lies at P57–H67. E552 is a binding site for L-isoleucyl-5'-AMP. A 'KMSKS' region motif is present at residues K593–S597. K596 is an ATP binding site. The Zn(2+) site is built by C888, C891, C908, and C911.

It belongs to the class-I aminoacyl-tRNA synthetase family. IleS type 1 subfamily. In terms of assembly, monomer. It depends on Zn(2+) as a cofactor.

It localises to the cytoplasm. The enzyme catalyses tRNA(Ile) + L-isoleucine + ATP = L-isoleucyl-tRNA(Ile) + AMP + diphosphate. Functionally, catalyzes the attachment of isoleucine to tRNA(Ile). As IleRS can inadvertently accommodate and process structurally similar amino acids such as valine, to avoid such errors it has two additional distinct tRNA(Ile)-dependent editing activities. One activity is designated as 'pretransfer' editing and involves the hydrolysis of activated Val-AMP. The other activity is designated 'posttransfer' editing and involves deacylation of mischarged Val-tRNA(Ile). In Bacillus cereus (strain ZK / E33L), this protein is Isoleucine--tRNA ligase 1.